The chain runs to 122 residues: Large ribosomal subunit protein uL14 (122 aa).

Belongs to the universal ribosomal protein uL14 family. As to quaternary structure, part of the 50S ribosomal subunit. Forms a cluster with proteins L3 and L19. In the 70S ribosome, L14 and L19 interact and together make contacts with the 16S rRNA in bridges B5 and B8.

In terms of biological role, binds to 23S rRNA. Forms part of two intersubunit bridges in the 70S ribosome. The polypeptide is Large ribosomal subunit protein uL14 (Thermus aquaticus).